Consider the following 827-residue polypeptide: 6-phosphofructo-2-kinase 1 (827 aa).

Disordered regions lie at residues Met-1 to Ala-97 and Thr-149 to Ile-175. The segment covering Ser-31–Arg-41 has biased composition (low complexity). Basic and acidic residues predominate over residues Ser-42–Lys-59. A compositionally biased stretch (polar residues) spans Thr-72–Ala-97. Ser-92 bears the Phosphoserine mark. Thr-157 bears the Phosphothreonine mark. Position 190-197 (Gly-190–Ser-197) interacts with ATP. Residues Asp-277 and Cys-309 contribute to the active site. Arg-343 serves as a coordination point for beta-D-fructose 6-phosphate. Ser-404 (phosphoserine intermediate) is an active-site residue. Glu-497 is an active-site residue. His-565 serves as the catalytic Proton donor. A phosphoserine mark is found at Ser-644, Ser-652, Ser-659, and Ser-667. 2 disordered regions span residues Ala-649–Asn-704 and His-799–Val-827. Residues Ser-671–Gln-682 show a composition bias toward low complexity. The span at Pro-683–Asn-704 shows a compositional bias: polar residues.

The enzyme catalyses beta-D-fructose 6-phosphate + ATP = beta-D-fructose 2,6-bisphosphate + ADP + H(+). Its activity is regulated as follows. Phosphorylation results in the activation of the kinase activity. Functionally, synthesis of fructose 2,6-bisphosphate. In Saccharomyces cerevisiae (strain ATCC 204508 / S288c) (Baker's yeast), this protein is 6-phosphofructo-2-kinase 1 (PFK26).